The chain runs to 203 residues: Cardiotrophin-1 (203 aa).

This sequence belongs to the IL-6 superfamily. Highly expressed in heart, skeletal muscle, liver, lung and kidney. Lower levels in testis and brain. No expression in spleen.

The protein localises to the secreted. In terms of biological role, induces cardiac myocyte hypertrophy in vitro. Binds to and activates the ILST/gp130 receptor. This Mus musculus (Mouse) protein is Cardiotrophin-1 (Ctf1).